A 145-amino-acid polypeptide reads, in one-letter code: Hemoglobin subunit beta (145 aa).

The region spanning 1-145 (MLTAEEKAAV…VANALAHRYH (145 aa)) is the Globin domain. Phosphothreonine is present on Thr-11. Phosphoserine is present on Ser-43. At Lys-58 the chain carries N6-acetyllysine. His-62 serves as a coordination point for heme b. Lys-81 is modified (N6-acetyllysine). His-91 serves as a coordination point for heme b. S-nitrosocysteine is present on Cys-92.

This sequence belongs to the globin family. As to quaternary structure, heterotetramer of two alpha chains and two beta chains. Red blood cells.

Involved in oxygen transport from the lung to the various peripheral tissues. This chain is Hemoglobin subunit beta (HBB), found in Tragelaphus strepsiceros (Greater kudu).